The sequence spans 266 residues: GTP-binding protein Rhes (266 aa).

26–33 (GASRVGKS) is a GTP binding site. An Effector region motif is present at residues 48–56 (YTPTIEDFH). GTP is bound by residues 73 to 77 (DTSGN) and 140 to 143 (NKND). Residues 189-235 (MAKLPHEMSPALHHKISVQYGDAFHPRPFCMRRTKVAGAYGMVSPFA) are interaction with GNB1, GNB2 and GNB3. Cys-263 bears the Cysteine methyl ester mark. The S-farnesyl cysteine moiety is linked to residue Cys-263. Residues 264–266 (SIQ) constitute a propeptide, removed in mature form.

The protein belongs to the small GTPase superfamily. RasD family. Monomer (Potential). Interacts with PIK3CA and UBE2I. Interacts with GNB1, GNB2 and GNB3. Farnesylated. Farnesylation is required for membrane targeting. As to expression, highly expressed in brain; prominently in the striatum and weakly in kidney, thyroid, lung, heart and testis. Not expressed in liver. Expressed in pancreatic cell lines and in a embryonic stem cell line.

The protein localises to the cell membrane. GTPase signaling protein that binds to and hydrolyzes GTP. Regulates signaling pathways involving G-proteins-coupled receptor and heterotrimeric proteins such as GNB1, GNB2 and GNB3. May be involved in selected striatal competencies, mainly locomotor activity and motor coordination. The polypeptide is GTP-binding protein Rhes (Rasd2) (Mus musculus (Mouse)).